A 292-amino-acid polypeptide reads, in one-letter code: Transforming growth factor-beta receptor type 3-like protein (292 aa).

The first 16 residues, 1-16 (MLGTVLLLALLPGITT), serve as a signal peptide directing secretion. The ZP; truncated domain occupies 17–170 (LPSGPPAPPF…APAPLTPPPP (154 aa)). The Extracellular portion of the chain corresponds to 17–244 (LPSGPPAPPF…PAPAALEPAP (228 aa)). An intrachain disulfide couples C85 to C147. Residues 160 to 236 (RAPAPLTPPP…AVRPEPPAPA (77 aa)) form a disordered region. 2 stretches are compositionally biased toward pro residues: residues 164–175 (PLTPPPPPPPSR) and 213–222 (PRPPPRPPKS). Residues 245 to 265 (VVALVLAAFVLGAALAAGLGL) form a helical membrane-spanning segment. At 266–292 (VCAHSAPHAPGPPARASPSGPQPRRSQ) the chain is on the cytoplasmic side. A disordered region spans residues 273–292 (HAPGPPARASPSGPQPRRSQ). A compositionally biased stretch (low complexity) spans 281-292 (ASPSGPQPRRSQ).

Glycosylated. In terms of tissue distribution, expressed in pituitary gland gonadotrope cells.

It localises to the cell membrane. Functionally, expressed in gonadotrope cells, acts as an inhibin B coreceptor and regulates follicle-stimulating hormone (FSH) levels and female fertility. In Homo sapiens (Human), this protein is Transforming growth factor-beta receptor type 3-like protein.